A 398-amino-acid polypeptide reads, in one-letter code: S-adenosylmethionine synthase (398 aa).

ATP is bound at residue His-16. Asp-18 is a binding site for Mg(2+). Glu-51 serves as a coordination point for K(+). 2 residues coordinate L-methionine: Glu-64 and Gln-108. The interval 108-118 (QSADIAQGVDA) is flexible loop. Residues 176–178 (DSK), 242–243 (KF), Asp-251, 257–258 (RK), Ala-274, and Lys-278 contribute to the ATP site. Asp-251 provides a ligand contact to L-methionine. Residue Lys-282 participates in L-methionine binding.

The protein belongs to the AdoMet synthase family. In terms of assembly, homotetramer; dimer of dimers. The cofactor is Mg(2+). It depends on K(+) as a cofactor.

The protein localises to the cytoplasm. It carries out the reaction L-methionine + ATP + H2O = S-adenosyl-L-methionine + phosphate + diphosphate. It functions in the pathway amino-acid biosynthesis; S-adenosyl-L-methionine biosynthesis; S-adenosyl-L-methionine from L-methionine: step 1/1. Catalyzes the formation of S-adenosylmethionine (AdoMet) from methionine and ATP. The overall synthetic reaction is composed of two sequential steps, AdoMet formation and the subsequent tripolyphosphate hydrolysis which occurs prior to release of AdoMet from the enzyme. This chain is S-adenosylmethionine synthase, found in Rhodopseudomonas palustris (strain BisB5).